A 164-amino-acid chain; its full sequence is Phosphopantetheine adenylyltransferase (164 aa).

S10 is a binding site for substrate. Residues 10–11 (SF) and H18 contribute to the ATP site. Substrate contacts are provided by K42, L74, and R88. Residues 89 to 91 (GLR), E99, and 124 to 130 (YSFLSSS) each bind ATP.

The protein belongs to the bacterial CoaD family. Homohexamer. The cofactor is Mg(2+).

The protein resides in the cytoplasm. The enzyme catalyses (R)-4'-phosphopantetheine + ATP + H(+) = 3'-dephospho-CoA + diphosphate. It functions in the pathway cofactor biosynthesis; coenzyme A biosynthesis; CoA from (R)-pantothenate: step 4/5. Its function is as follows. Reversibly transfers an adenylyl group from ATP to 4'-phosphopantetheine, yielding dephospho-CoA (dPCoA) and pyrophosphate. This is Phosphopantetheine adenylyltransferase from Exiguobacterium sp. (strain ATCC BAA-1283 / AT1b).